Here is a 137-residue protein sequence, read N- to C-terminus: Large ribosomal subunit protein uL16 (137 aa).

It belongs to the universal ribosomal protein uL16 family. As to quaternary structure, part of the 50S ribosomal subunit.

Binds 23S rRNA and is also seen to make contacts with the A and possibly P site tRNAs. This is Large ribosomal subunit protein uL16 from Legionella pneumophila (strain Paris).